The primary structure comprises 359 residues: PWWP domain-containing protein 1 (359 aa).

Positions 1 to 37 (MNNARTNAKRRRLSSKQGGLSISEGKESNIPSVVEES) are disordered. Residues 52 to 114 (FGDRILVKAP…RNSVKPLLDS (63 aa)) form the PWWP domain. Disordered regions lie at residues 133-161 (AYEA…AAEE) and 204-255 (VAST…SPLN). The span at 204 to 224 (VASTSRSSTQLSDQRYPLSSN) shows a compositional bias: polar residues. Ser252 is subject to Phosphoserine.

Interacts with set9 and histone H4K20me1. Associates with nucleosomes.

Its subcellular location is the nucleus. In terms of biological role, necessary for DNA damage checkpoint activation. Required for the association of set9 with chromatin and subsequent methylation of H4K20. Associates with H4K20me1 to increase the concentration of set9 on chromatin to perform H4K20me3. H4K20me3 is mainly enriched at heterochromatin and is required for proper heterochromatin assembly. The chain is PWWP domain-containing protein 1 (pdp1) from Schizosaccharomyces pombe (strain 972 / ATCC 24843) (Fission yeast).